The following is a 1326-amino-acid chain: Paired amphipathic helix protein Sin3-like 4 (1326 aa).

PAH domains are found at residues 8–78, 95–165, and 292–367; these read QKLT…LPKG, KPVE…LPDT, and IPSS…LAQC. Disordered stretches follow at residues 272–299, 715–812, 844–864, and 927–1000; these read DDDS…STYD, VPSR…RAET, SVAG…TEEL, and SKSK…EGDM. Basic and acidic residues predominate over residues 721-737; that stretch reads GAEDREDAVKSTNHDRE. Polar residues-rich tracts occupy residues 744-757, 781-805, 844-861, and 942-961; these read SPQN…SMRS, SSKT…NLTT, SVAG…TSGT, and PRSS…SGTD. Positions 967-981 are enriched in basic and acidic residues; sequence DCYREDDIDHNKVES.

The protein localises to the nucleus. Its function is as follows. Acts as a transcriptional repressor. Plays roles in regulating gene expression and genome stability. This chain is Paired amphipathic helix protein Sin3-like 4 (SNL4), found in Arabidopsis thaliana (Mouse-ear cress).